The sequence spans 660 residues: Probable beta-hexosaminidase fdl (660 aa).

A signal peptide spans 1–36 (MSLAVSLRRALLVLLTGAIFILTVLYWNQGVTKAQA). Asn-210, Asn-412, and Asn-452 each carry an N-linked (GlcNAc...) asparagine glycan.

This sequence belongs to the glycosyl hydrolase 20 family. In terms of tissue distribution, in third instar larval and early pupal brains, expressed in cells sending projections across the interhemispheric junction. In adult brain, expressed in mushroom body, ellipsoid body and pars intercerebralis.

It catalyses the reaction Hydrolysis of terminal non-reducing N-acetyl-D-hexosamine residues in N-acetyl-beta-D-hexosaminides.. Involved in brain restructurization via hormonal control during metamorphosis. Implicated in N-glycan processing. The polypeptide is Probable beta-hexosaminidase fdl (fdl) (Drosophila melanogaster (Fruit fly)).